The chain runs to 613 residues: Probable LRR receptor-like serine/threonine-protein kinase At5g10290 (613 aa).

A signal peptide spans 1–31; it reads MRMFSLQKMAMAFTLLFFACLCSFVSPDAQG. Residues 32–225 lie on the Extracellular side of the membrane; sequence DALFALRISL…SGDSSKPKTG (194 aa). Asparagine 81 and asparagine 116 each carry an N-linked (GlcNAc...) asparagine glycan. LRR repeat units follow at residues 95 to 117, 119 to 141, 143 to 166, and 167 to 189; these read NLKT…FGNL, SLTS…IGNL, KLQF…TGLP, and NLLN…LFEI. Residue asparagine 155 is glycosylated (N-linked (GlcNAc...) asparagine). Asparagine 193 is a glycosylation site (N-linked (GlcNAc...) asparagine). A helical transmembrane segment spans residues 226-246; the sequence is IIAGVVAGVTVVLFGILLFLF. Over 247-613 the chain is Cytoplasmic; the sequence is CKDRHKGYRR…QDAIELSGGR (367 aa). Threonine 287 carries the post-translational modification Phosphothreonine. The region spanning 290–569 is the Protein kinase domain; sequence FSEKNVLGQG…VVRMLEGEGL (280 aa). 296-304 contacts ATP; the sequence is LGQGGFGKV. A Phosphothreonine modification is found at threonine 313. ATP is bound at residue lysine 318. Serine 371 is subject to Phosphoserine. Threonine 390 bears the Phosphothreonine mark. Aspartate 417 serves as the catalytic Proton acceptor. Phosphothreonine is present on residues threonine 450, threonine 451, and threonine 456. Position 464 is a phosphotyrosine (tyrosine 464). The residue at position 466 (serine 466) is a Phosphoserine. Threonine 467 is subject to Phosphothreonine. Serine 471 bears the Phosphoserine mark. Threonine 547 carries the post-translational modification Phosphothreonine.

It belongs to the protein kinase superfamily. Ser/Thr protein kinase family.

It localises to the cell membrane. The catalysed reaction is L-seryl-[protein] + ATP = O-phospho-L-seryl-[protein] + ADP + H(+). It catalyses the reaction L-threonyl-[protein] + ATP = O-phospho-L-threonyl-[protein] + ADP + H(+). The sequence is that of Probable LRR receptor-like serine/threonine-protein kinase At5g10290 from Arabidopsis thaliana (Mouse-ear cress).